A 335-amino-acid chain; its full sequence is Large ribosomal subunit protein uL3 (335 aa).

A disordered region spans residues 1 to 20 (MATIHRPRRGSLAFSPRKRA).

This sequence belongs to the universal ribosomal protein uL3 family. In terms of assembly, part of the 50S ribosomal subunit. Forms a cluster with proteins L14 and L24e.

In terms of biological role, one of the primary rRNA binding proteins, it binds directly near the 3'-end of the 23S rRNA, where it nucleates assembly of the 50S subunit. The polypeptide is Large ribosomal subunit protein uL3 (rpl3) (Methanothrix harundinacea (strain 6Ac) (Methanosaeta harundinacea)).